The primary structure comprises 255 residues: Small ribosomal subunit protein uS2 (255 aa).

The protein belongs to the universal ribosomal protein uS2 family.

The protein is Small ribosomal subunit protein uS2 of Streptococcus thermophilus (strain ATCC BAA-491 / LMD-9).